The chain runs to 941 residues: UvrABC system protein A (941 aa).

37-44 contacts ATP; it reads GLSGSGKS. The C4-type zinc finger occupies 260-287; the sequence is CFKCKMSFEELEPLSFSFNSPKGACESC. ABC transporter domains lie at 316–585 and 605–937; these read IFGY…NNHS and KEKH…KFLA. 637–644 contributes to the ATP binding site; sequence GVSGSGKS. The C4-type zinc-finger motif lies at 737 to 763; that stretch reads CEKCQGDGDIKIEMHFLPDVLVQCDSC.

It belongs to the ABC transporter superfamily. UvrA family. In terms of assembly, forms a heterotetramer with UvrB during the search for lesions.

It localises to the cytoplasm. The UvrABC repair system catalyzes the recognition and processing of DNA lesions. UvrA is an ATPase and a DNA-binding protein. A damage recognition complex composed of 2 UvrA and 2 UvrB subunits scans DNA for abnormalities. When the presence of a lesion has been verified by UvrB, the UvrA molecules dissociate. The polypeptide is UvrABC system protein A (Helicobacter pylori (strain J99 / ATCC 700824) (Campylobacter pylori J99)).